Reading from the N-terminus, the 162-residue chain is Transcriptional repressor NrdR (162 aa).

Positions 1 to 21 (MNCPDCGNGRTRVIDTGASSD) are disordered. A zinc finger lies at 3-34 (CPDCGNGRTRVIDTGASSDGASVRRRRECQRC). Positions 49–139 (LQVKKRDGTI…VYKAFSEPQE (91 aa)) constitute an ATP-cone domain.

It belongs to the NrdR family. The cofactor is Zn(2+).

Its function is as follows. Negatively regulates transcription of bacterial ribonucleotide reductase nrd genes and operons by binding to NrdR-boxes. The protein is Transcriptional repressor NrdR of Natronomonas pharaonis (strain ATCC 35678 / DSM 2160 / CIP 103997 / JCM 8858 / NBRC 14720 / NCIMB 2260 / Gabara) (Halobacterium pharaonis).